A 111-amino-acid chain; its full sequence is 2Fe-2S ferredoxin (111 aa).

A 2Fe-2S ferredoxin-type domain is found at 1–104 (MPKIFFLPHK…DIEVQIPLYN (104 aa)). The [2Fe-2S] cluster site is built by C42, C48, C51, and C87.

The protein belongs to the adrenodoxin/putidaredoxin family. The cofactor is [2Fe-2S] cluster.

Ferredoxin are iron-sulfur proteins that transfer electrons in a wide variety of metabolic reactions. This Buchnera aphidicola subsp. Schizaphis graminum (strain Sg) protein is 2Fe-2S ferredoxin (fdx).